We begin with the raw amino-acid sequence, 452 residues long: Ribosomal protein uS12 methylthiotransferase RimO (452 aa).

In terms of domain architecture, MTTase N-terminal spans 5 to 116 (PTIAFSHLGC…IVDVLQRTES (112 aa)). 6 residues coordinate [4Fe-4S] cluster: Cys-14, Cys-50, Cys-79, Cys-154, Cys-158, and Cys-161. Positions 140–369 (TTTSAVAYLR…MATQQPIAER (230 aa)) constitute a Radical SAM core domain. Residues 372–438 (RAQIGRLVDV…IYDLHGEVAS (67 aa)) form the TRAM domain.

Belongs to the methylthiotransferase family. RimO subfamily. It depends on [4Fe-4S] cluster as a cofactor.

The protein resides in the cytoplasm. The enzyme catalyses L-aspartate(89)-[ribosomal protein uS12]-hydrogen + (sulfur carrier)-SH + AH2 + 2 S-adenosyl-L-methionine = 3-methylsulfanyl-L-aspartate(89)-[ribosomal protein uS12]-hydrogen + (sulfur carrier)-H + 5'-deoxyadenosine + L-methionine + A + S-adenosyl-L-homocysteine + 2 H(+). Its function is as follows. Catalyzes the methylthiolation of an aspartic acid residue of ribosomal protein uS12. This is Ribosomal protein uS12 methylthiotransferase RimO from Synechococcus sp. (strain ATCC 27144 / PCC 6301 / SAUG 1402/1) (Anacystis nidulans).